A 210-amino-acid chain; its full sequence is Tetraspanin-31 (210 aa).

Topologically, residues 1-12 (MVCGGFACSRNA) are cytoplasmic. The helical transmembrane segment at 13 to 33 (LCALNVVYMLVGFLLIGVAAW) threads the bilayer. At 34-44 (GKGLGVVSSIH) the chain is on the extracellular side. The chain crosses the membrane as a helical span at residues 45–65 (IIGGVIAVGVFLLLIAVAGLV). The Cytoplasmic segment spans residues 66 to 72 (GAANHHQ). The helical transmembrane segment at 73–93 (VLLFFYMIILGLVFIFQFGIS) threads the bilayer. The Extracellular segment spans residues 94–173 (CSCLAINRNT…FLKHSDKALK (80 aa)). Residues Asn-109, Asn-117, and Asn-134 are each glycosylated (N-linked (GlcNAc...) asparagine). The helical transmembrane segment at 174 to 194 (ILGGVGLFFSFTEILGVWLAM) threads the bilayer. Residues 195–210 (RFRNQKDPRANPSAFL) are Cytoplasmic-facing.

The protein belongs to the tetraspanin (TM4SF) family.

Its subcellular location is the membrane. This chain is Tetraspanin-31 (Tspan31), found in Mus musculus (Mouse).